The chain runs to 25 residues: Secapin-1 (25 aa).

A disulfide bond links Cys-9 and Cys-20.

In terms of tissue distribution, expressed by the venom gland.

The protein resides in the secreted. In terms of biological role, serine protease inhibitor which exhibits antifibrinolytic, antielastolytic and antimicrobial activities. Displays antimicrobial activity against bacteria and fungi. Likely functions in the innate immune response to microbial infection and possibly in the venom, as an antifibrinolytic agent. In Apis mellifera (Honeybee), this protein is Secapin-1.